The following is a 691-amino-acid chain: Elongation factor G (691 aa).

Positions 12–286 (KKLRNIGIMA…GVLEYLPSPL (275 aa)) constitute a tr-type G domain. Residues 21–28 (AHIDAGKT), 85–89 (DTPGH), and 139–142 (NKMD) each bind GTP.

The protein belongs to the TRAFAC class translation factor GTPase superfamily. Classic translation factor GTPase family. EF-G/EF-2 subfamily.

The protein resides in the cytoplasm. In terms of biological role, catalyzes the GTP-dependent ribosomal translocation step during translation elongation. During this step, the ribosome changes from the pre-translocational (PRE) to the post-translocational (POST) state as the newly formed A-site-bound peptidyl-tRNA and P-site-bound deacylated tRNA move to the P and E sites, respectively. Catalyzes the coordinated movement of the two tRNA molecules, the mRNA and conformational changes in the ribosome. The polypeptide is Elongation factor G (Thermosipho melanesiensis (strain DSM 12029 / CIP 104789 / BI429)).